The sequence spans 194 residues: 5-formyltetrahydrofolate cyclo-ligase (194 aa).

ATP is bound by residues 6–10 (KSQLR), 139–146 (GRGAGFYD), and Asp177.

Belongs to the 5-formyltetrahydrofolate cyclo-ligase family.

The enzyme catalyses (6S)-5-formyl-5,6,7,8-tetrahydrofolate + ATP = (6R)-5,10-methenyltetrahydrofolate + ADP + phosphate. It functions in the pathway one-carbon metabolism; tetrahydrofolate interconversion. In terms of biological role, involved in the removal of 5-formyltetrahydrofolate. In vitro, it is a potent inhibitor of various folate-dependent enzymes in the C1 metabolism network and in vivo it might function as a folate storage. 5-formyltetrahydrofolate is also used as an antifolate rescue agent in cancer chemotherapy. Catalyzes the irreversible ATP-dependent transformation of 5-formyltetrahydrofolate (5-CHO-THF) to form 5,10-methenyltetrahydrofolate (5,10-CH=THF). The reverse reaction is catalyzed by the serine hydroxymethyltransferase GlyA (SHMT). The chain is 5-formyltetrahydrofolate cyclo-ligase from Mycolicibacterium smegmatis (strain ATCC 700084 / mc(2)155) (Mycobacterium smegmatis).